Here is a 611-residue protein sequence, read N- to C-terminus: Probable inactive purple acid phosphatase 27 (611 aa).

The N-terminal stretch at 1 to 18 is a signal peptide; the sequence is MARNFLLVLLWFIVQVSS. N-linked (GlcNAc...) asparagine glycosylation is found at N263 and N271. D293 contributes to the Fe cation binding site. N-linked (GlcNAc...) asparagine glycosylation is present at N314. 2 residues coordinate Fe cation: D334 and Y337. D334 contributes to the Zn(2+) binding site. Zn(2+) is bound by residues N367, H456, and H498. Position 367 (N367) interacts with substrate. 498–500 contributes to the substrate binding site; the sequence is HVH. A Fe cation-binding site is contributed by H500.

It belongs to the metallophosphoesterase superfamily. Purple acid phosphatase family. In terms of assembly, homodimer. Fe cation serves as cofactor. The cofactor is Zn(2+). Expressed in roots, stems, leaves, flowers and siliques.

Its subcellular location is the secreted. The protein is Probable inactive purple acid phosphatase 27 (PAP27) of Arabidopsis thaliana (Mouse-ear cress).